The following is a 181-amino-acid chain: MSNTTEKKMPQQQQVERPTALAPADAEIERVFTRFDADGDGRISPSELAAVTRAIAPPPSESAGGREVAAMMNELDTDRDGFVDLGEFAAFHGRGRGDAEHEAELRAAFDVYDVDGDGRITAAELGKVLGRIGEGCSAEECERMIASVDVDGDGCVGFEEFKKMMCRDAAATGGADKAKTE.

The tract at residues 1–24 is disordered; sequence MSNTTEKKMPQQQQVERPTALAPA. EF-hand domains are found at residues 23–58, 63–98, 100–135, and 136–171; these read PADAEIERVFTRFDADGDGRISPSELAAVTRAIAPP, AGGREVAAMMNELDTDRDGFVDLGEFAAFHGRGRGD, EHEAELRAAFDVYDVDGDGRITAAELGKVLGRIGEG, and CSAEECERMIASVDVDGDGCVGFEEFKKMMCRDAAA. Residues Asp36, Asp38, Asp40, Arg42, Glu47, Asp76, Asp78, Asp80, Glu87, Asp113, Asp115, Asp117, Arg119, Glu124, Asp149, Asp151, Asp153, Cys155, and Glu160 each contribute to the Ca(2+) site.

Potential calcium sensor. This Oryza sativa subsp. japonica (Rice) protein is Probable calcium-binding protein CML16 (CML16).